Reading from the N-terminus, the 424-residue chain is MSKEKVLLAYSGGLDTSCILKWLLEQDYEVICFMADVGQTEDFAAAREKALKIGAADVVVKDMKDFFVEKFVWPAVQMGLIYEDRYLLGTSLARPCISKGLMDVAVQRGCSYISHGATGKGNDQIRFELSCYALSPTIRVIAPWRMETFCQRFQGRSDLLEYAKRSNIPVSATTKAPWSMDANIMHISYESGILEDPSVAAPEELYQLTQSPTRAPDTPTVAEIVFKAGLPVRVTELVSGRTMERPVDILAFLNKAGGEHGVGRIDIVENRYIGLKSRGVYETPGVTVLHCAHRDLEIYCLDREVLRVKKYLADRMADYVYNGYWYAPEAEYVRKCILESQKHVSGKVVVEMFKGHVMVTSRESMHSLYNQELASMEVHGNFSPYSSTGFIEINAVRLREHHRVFGTANMTKHFSRTESDMKLI.

Residues 9 to 17 (AYSGGLDTS) and alanine 35 contribute to the ATP site. L-citrulline-binding residues include tyrosine 86 and serine 91. 114–122 (SHGATGKGN) contributes to the ATP binding site. 3 residues coordinate L-aspartate: threonine 118, asparagine 122, and aspartate 123. An L-citrulline-binding site is contributed by asparagine 122. Residues arginine 126, serine 179, serine 188, glutamate 269, and tyrosine 281 each coordinate L-citrulline.

It belongs to the argininosuccinate synthase family. In terms of assembly, homotetramer.

The catalysed reaction is L-citrulline + L-aspartate + ATP = 2-(N(omega)-L-arginino)succinate + AMP + diphosphate + H(+). The protein operates within amino-acid biosynthesis; L-arginine biosynthesis; L-arginine from L-ornithine and carbamoyl phosphate: step 2/3. It functions in the pathway nitrogen metabolism; urea cycle; (N(omega)-L-arginino)succinate from L-aspartate and L-citrulline: step 1/1. In Anopheles gambiae (African malaria mosquito), this protein is Argininosuccinate synthase.